Reading from the N-terminus, the 673-residue chain is MNRKDIKRKSHQECSGKAGGRGRSRQARRHKTCPTPREISKVMASMNLGVLSESSCSEDELLEECIRCFDSAGSLRRGDHILKMVLTMHSWVLPSSELAARLLTSYQKAAKDAQELRQLQICYLVRYWLTHHHEAVHQEPQLEAVISRFWTTVAQEGNMAQRSLGDASSLLSPGGPGPPPPMSSPGLGKKRKVSLLFDHLETEELAQHLTYLEFRSFQAITPQDLRGYVLQGSVRGCPALEGSVGLSNSVSRWVQVMVLSRPGPAQRAQVLDKFIRVAQRLHQLQNFNTLMAVTGGLCHSAISRLKDSHVHLSPDSTKALLELTELLSSHNNYAHYRRTWAGCTGFRLPVLGVHLKDLVSLYEAHPDRLPDGRLHLPKLNSLYLRLQELMALQGQHPPCSANEDLLHLLTLSLDLFYTEDEIYELSYAREPRCPKSLPPSPFKAPVVVEWAQGVTPKPDSVTLGQHVEQLVESVFKNYDPEGRGSISLEDFERLSGNFPFACHGLHPPPRHGSGSFSREELTKYLLHASAICSKLGLAFLHAFQEVTFRKPTFCHSCSGFLWGVTKQGYRCRDCGLCCHRHCRDQVRVECKKRPETKGDPGPPGAPVPATSLPPANCGSEESLSYTLSPDPESGCHLRHAWTQTESSHSSWEPEVVPCPARVLPSRASSKPSV.

2 stretches are compositionally biased toward basic residues: residues 1-10 (MNRKDIKRKS) and 20-32 (GRGRSRQARRHKT). Disordered stretches follow at residues 1-34 (MNRKDIKRKSHQECSGKAGGRGRSRQARRHKTCP) and 164-188 (LGDASSLLSPGGPGPPPPMSSPGLG). The region spanning 49-175 (GVLSESSCSE…DASSLLSPGG (127 aa)) is the N-terminal Ras-GEF domain. Residues 164–173 (LGDASSLLSP) are compositionally biased toward low complexity. Positions 201-432 (ETEELAQHLT…YELSYAREPR (232 aa)) constitute a Ras-GEF domain. In terms of domain architecture, EF-hand spans 466–501 (HVEQLVESVFKNYDPEGRGSISLEDFERLSGNFPFA). Residues 540–590 (LHAFQEVTFRKPTFCHSCSGFLWGVTKQGYRCRDCGLCCHRHCRDQVRVEC) form a Phorbol-ester/DAG-type zinc finger. The tract at residues 592 to 633 (KRPETKGDPGPPGAPVPATSLPPANCGSEESLSYTLSPDPES) is disordered.

The protein belongs to the RASGRP family. Expressed by mast cells and their progenitors (at protein level). Expressed by dendritic cells. In terms of tissue distribution, expressed in neutrophils.

It localises to the cytoplasm. The protein resides in the cell membrane. Functionally, functions as a cation- and diacylglycerol (DAG)-regulated nucleotide exchange factor activating Ras through the exchange of bound GDP for GTP. In neutrophils, participates in a phospholipase C-activating N-formyl peptide-activated GPCR (G protein-coupled receptor) signaling pathway by promoting Ras-mediated activation of PIK3CG/PI3Kgamma to promote neutrophil functional responses. In CD117(+) dendritic cells and mast cells, participates in an lipopolysaccharide (LPS)-activated signaling pathway that stimulates the production of interferon-gamma and other pro-inflammatory cytokines by natural killer (NK) cells. May function in mast cell differentiation. Does not appear to be required for the development of B-cells, DC-cells, T-cells, or NK-cells. Binds diacylglycerol (DAG). Its function is as follows. Unable to bind diacylglycerol (DAG). In Mus musculus (Mouse), this protein is RAS guanyl-releasing protein 4 (Rasgrp4).